A 184-amino-acid polypeptide reads, in one-letter code: MEDYKAFLDEKMSKVLLSLDNEYKTLRTGRISSNIFDKIFIQYHGQRTPITQVSSIRIPEARLVVIQPWDKTILNKIEQAILNSDLSMNPSSDGSVIRIKVPALTSERRQDIVKHAKKIAEEHKISTRNIRQDLNNKVKKQEKESEITEDSLKRILDDIQKSTDIYIKKIDAILESKIQEIMEV.

It belongs to the RRF family.

The protein resides in the cytoplasm. Functionally, responsible for the release of ribosomes from messenger RNA at the termination of protein biosynthesis. May increase the efficiency of translation by recycling ribosomes from one round of translation to another. The protein is Ribosome-recycling factor of Borreliella afzelii (strain PKo) (Borrelia afzelii).